The sequence spans 634 residues: Growth hormone receptor (634 aa).

An N-terminal signal peptide occupies residues 1–18 (MDLWQLLLTLAVAGSSDA). Over 19 to 260 (FSGSEATPAF…NPSACEEDFQ (242 aa)) the chain is Extracellular. Asn46 carries an N-linked (GlcNAc...) asparagine glycan. Cys56 and Cys66 are disulfide-bonded. Asn73 is a glycosylation site (N-linked (GlcNAc...) asparagine). Cys97 and Cys108 are oxidised to a cystine. N-linked (GlcNAc...) asparagine glycosylation occurs at Asn111. Cys122 and Cys136 are joined by a disulfide. In terms of domain architecture, Fibronectin type-III spans 147–250 (PPVGLNWTLL…EVLLITFPQM (104 aa)). 3 N-linked (GlcNAc...) asparagine glycosylation sites follow: Asn152, Asn157, and Asn196. A WSXWS motif motif is present at residues 236-240 (YGKFS). Residues 261 to 284 (FPWFLIIMFGILGLAVTLFLLIFS) form a helical membrane-spanning segment. Topologically, residues 285-634 (KQQRIKMLIL…STDQLNKIMP (350 aa)) are cytoplasmic. A required for JAK2 binding region spans residues 290–375 (KMLILPPVPV…HEKSLNIFGA (86 aa)). The short motif at 293 to 301 (ILPPVPVPK) is the Box 1 motif element. Residues 336 to 345 (DSWVEFIELD) carry the UbE motif motif. Position 337 is a phosphoserine (Ser337). 2 positions are modified to phosphotyrosine: Tyr483 and Tyr591.

It belongs to the type I cytokine receptor family. Type 1 subfamily. On growth hormone (GH) binding, forms homodimers and binds JAK2 via a box 1-containing domain. In terms of processing, the soluble form (GHBP) is produced by phorbol ester-promoted proteolytic cleavage at the cell surface (shedding) by ADAM17/TACE. Shedding is inhibited by growth hormone (GH) binding to the receptor probably due to a conformational change in GHR rendering the receptor inaccessible to ADAM17. Post-translationally, on GH binding, phosphorylated on tyrosine residues in the cytoplasmic domain by JAK2. Ubiquitinated by the ECS(SOCS2) complex following ligand-binding and phosphorylation by JAK2, leading to its degradation by the proteasome. Regulation by the ECS(SOCS2) complex acts as a negative feedback loop of growth hormone receptor signaling. Ubiquitination is not sufficient for GHR internalization.

Its subcellular location is the cell membrane. The protein resides in the secreted. Functionally, receptor for pituitary gland growth hormone (GH1) involved in regulating postnatal body growth. On ligand binding, couples to the JAK2/STAT5 pathway. Its function is as follows. The soluble form (GHBP) acts as a reservoir of growth hormone in plasma and may be a modulator/inhibitor of GH signaling. This Bos indicus (Zebu) protein is Growth hormone receptor (GHR).